Consider the following 147-residue polypeptide: Large ribosomal subunit protein uL13 (147 aa).

The protein belongs to the universal ribosomal protein uL13 family. Part of the 50S ribosomal subunit.

Functionally, this protein is one of the early assembly proteins of the 50S ribosomal subunit, although it is not seen to bind rRNA by itself. It is important during the early stages of 50S assembly. This chain is Large ribosomal subunit protein uL13, found in Latilactobacillus sakei subsp. sakei (strain 23K) (Lactobacillus sakei subsp. sakei).